A 335-amino-acid polypeptide reads, in one-letter code: Mycobacterial beta-ketoacyl-[acyl-carrier-protein] synthase III (335 aa).

Residues Cys122 and His258 contribute to the active site. The interval 259-263 (QANSR) is ACP-binding. Asn289 is an active-site residue.

It belongs to the thiolase-like superfamily. FabH family. As to quaternary structure, homodimer.

Its subcellular location is the cytoplasm. It catalyses the reaction malonyl-[ACP] + dodecanoyl-CoA + H(+) = 3-oxotetradecanoyl-[ACP] + CO2 + CoA. It participates in lipid metabolism; fatty acid biosynthesis. Its pathway is lipid metabolism; mycolic acid biosynthesis. Its function is as follows. Catalyzes the condensation reaction of fatty acid synthesis by the addition to an acyl acceptor of two carbons from malonyl-ACP. Catalyzes the first condensation reaction which initiates fatty acid synthesis and may therefore play a role in governing the total rate of fatty acid production. Possesses both acetoacetyl-ACP synthase and acetyl transacylase activities. Its substrate specificity determines the biosynthesis of branched-chain and/or straight-chain of fatty acids. The chain is Mycobacterial beta-ketoacyl-[acyl-carrier-protein] synthase III from Mycolicibacterium paratuberculosis (strain ATCC BAA-968 / K-10) (Mycobacterium paratuberculosis).